The following is a 396-amino-acid chain: Succinyl-CoA:mesaconate CoA-transferase (396 aa).

The Nucleophile role is filled by Asp-175.

The protein belongs to the CoA-transferase III family.

It carries out the reaction mesaconate + succinyl-CoA = 2-methylfumaryl-CoA + succinate. Involved in the methylaspartate cycle. Catalyzes the transfer of the CoA moiety from succinyl-CoA to mesaconate to generate mesaconyl-CoA (2-methylfumaryl-CoA) and succinate. The polypeptide is Succinyl-CoA:mesaconate CoA-transferase (Haloarcula marismortui (strain ATCC 43049 / DSM 3752 / JCM 8966 / VKM B-1809) (Halobacterium marismortui)).